Here is a 130-residue protein sequence, read N- to C-terminus: Ribosome-binding factor A (130 aa).

It belongs to the RbfA family. Monomer. Binds 30S ribosomal subunits, but not 50S ribosomal subunits or 70S ribosomes.

The protein resides in the cytoplasm. In terms of biological role, one of several proteins that assist in the late maturation steps of the functional core of the 30S ribosomal subunit. Associates with free 30S ribosomal subunits (but not with 30S subunits that are part of 70S ribosomes or polysomes). Required for efficient processing of 16S rRNA. May interact with the 5'-terminal helix region of 16S rRNA. The chain is Ribosome-binding factor A from Methylibium petroleiphilum (strain ATCC BAA-1232 / LMG 22953 / PM1).